The sequence spans 180 residues: uncharacterized protein (180 aa).

Positions 1–22 (MKRSIIAAAVFSSFFMSAGVFA) are cleaved as a signal peptide.

Belongs to the fimbrial protein family.

Part of the yehABCD fimbrial operon. Could contribute to adhesion to various surfaces in specific environmental niches. This is an uncharacterized protein from Escherichia coli (strain K12).